The primary structure comprises 87 residues: Defensin-like protein 81 (87 aa).

Residues 1–27 form the signal peptide; it reads MTIKKFLPLLLSSLMVYSLILLPIISG. 4 disulfide bridges follow: cysteine 33–cysteine 69, cysteine 37–cysteine 57, cysteine 43–cysteine 67, and cysteine 47–cysteine 68.

Belongs to the DEFL family.

It is found in the secreted. This is Defensin-like protein 81 from Arabidopsis thaliana (Mouse-ear cress).